A 523-amino-acid chain; its full sequence is Bifunctional purine biosynthesis protein PurH (523 aa).

The 150-residue stretch at 1 to 150 (MSDVVPVRNA…KNHGDVAIAT (150 aa)) folds into the MGS-like domain.

This sequence belongs to the PurH family.

The catalysed reaction is (6R)-10-formyltetrahydrofolate + 5-amino-1-(5-phospho-beta-D-ribosyl)imidazole-4-carboxamide = 5-formamido-1-(5-phospho-D-ribosyl)imidazole-4-carboxamide + (6S)-5,6,7,8-tetrahydrofolate. It catalyses the reaction IMP + H2O = 5-formamido-1-(5-phospho-D-ribosyl)imidazole-4-carboxamide. Its pathway is purine metabolism; IMP biosynthesis via de novo pathway; 5-formamido-1-(5-phospho-D-ribosyl)imidazole-4-carboxamide from 5-amino-1-(5-phospho-D-ribosyl)imidazole-4-carboxamide (10-formyl THF route): step 1/1. The protein operates within purine metabolism; IMP biosynthesis via de novo pathway; IMP from 5-formamido-1-(5-phospho-D-ribosyl)imidazole-4-carboxamide: step 1/1. This Rhodopirellula baltica (strain DSM 10527 / NCIMB 13988 / SH1) protein is Bifunctional purine biosynthesis protein PurH.